The following is a 47-amino-acid chain: Small, acid-soluble spore protein N (47 aa).

Residues 1–47 (MPREHDKQSKFAPSHLGTKPVEYKRNKGKKMHDKSGETPIIMQTKGE) form a disordered region.

Belongs to the SspN family.

The protein localises to the spore core. This is Small, acid-soluble spore protein N from Bacillus licheniformis (strain ATCC 14580 / DSM 13 / JCM 2505 / CCUG 7422 / NBRC 12200 / NCIMB 9375 / NCTC 10341 / NRRL NRS-1264 / Gibson 46).